A 98-amino-acid chain; its full sequence is uncharacterized protein (98 aa).

This sequence belongs to the HesB/IscA family.

This is an uncharacterized protein from Staphylococcus saprophyticus subsp. saprophyticus (strain ATCC 15305 / DSM 20229 / NCIMB 8711 / NCTC 7292 / S-41).